A 163-amino-acid chain; its full sequence is NADH-quinone oxidoreductase subunit I (163 aa).

2 consecutive 4Fe-4S ferredoxin-type domains span residues 53-83 (LRRY…IEAG) and 94-123 (VRYD…EGPN). The [4Fe-4S] cluster site is built by cysteine 63, cysteine 66, cysteine 69, cysteine 73, cysteine 103, cysteine 106, cysteine 109, and cysteine 113.

The protein belongs to the complex I 23 kDa subunit family. In terms of assembly, NDH-1 is composed of 14 different subunits. Subunits NuoA, H, J, K, L, M, N constitute the membrane sector of the complex. Requires [4Fe-4S] cluster as cofactor.

The protein resides in the cell inner membrane. The catalysed reaction is a quinone + NADH + 5 H(+)(in) = a quinol + NAD(+) + 4 H(+)(out). Its function is as follows. NDH-1 shuttles electrons from NADH, via FMN and iron-sulfur (Fe-S) centers, to quinones in the respiratory chain. The immediate electron acceptor for the enzyme in this species is believed to be ubiquinone. Couples the redox reaction to proton translocation (for every two electrons transferred, four hydrogen ions are translocated across the cytoplasmic membrane), and thus conserves the redox energy in a proton gradient. The chain is NADH-quinone oxidoreductase subunit I from Chelativorans sp. (strain BNC1).